The sequence spans 2763 residues: MENYQIRTLQDQLTSSKLRDRNAGLQELQSILKDNPGFIANEQINGLLNTLLSLLENEAGKYIDSIEDDTDSRQRKENISISRFSNITYTLRLFIETVIEKFKLSHLKLTISAVKDLFYNDARIIVPVINDVTYCILAIVKSEIFGNKIGPSQWLDVAEYTLWLIKITSSNRSNIRALTNSLDTFYVLLIKGSISLSKVAKEALVIITNLIVFEKGETATTNVLLSISSNLVARLHCQHYYDTTSLIIECWKLYTRIGKTNNFNLLNDISKIDIFGGGLLQNQIPIMPGQEIMGSRISHSVVLSTLQDYIPMKVKEMLDVDHSLTIGIYDDLNNSNMDLTYNTFAKTHCKDLAWLRLFGLYDTLCLYYRLSNQERENNATQILKKIKYEGSLQSNLNQCNSLLDYSQSLLESGDPLIQLLGCKLFFLLNLDHPIACNTELIDRLCINTNNISLTSWHLACIFTNISYDLWNFDETLYLKVLKYITPLLSTSEVNIMACLIFNKLLHSLTREPIDELSSLVNSIIASPDSVLPIEISSVTCEAWQHIFVFAINNLKVDNSLLLDSFSKWINHNITQTIHIEHLKLIFEFFLWSLDVVVGSTSHNKQHNTYNLLNLKTSDSALAIWYFYENQRKFLTQTIQTSSQASVNTKSMVCPITSTNIKIQWLLNIIDNYFTTSKNHSLKYTFAISLIYFINFIEKSGKVYTYLNQELNQRLNSILIELDFLSFDKWEEGKQFIEIICNQETFFNRLHNDVVFKDNILLSLINLFEKEYSHFLNADNGSTAKTGNDIYLNQRSILRFRTDIKLMTQFFTCVDSNVPGKIGIYLDRLLLYSMGPNESLVLDELLSWVTNPSNNQYYEVHSLEKLCQFLAKSLLNSKYQLSDFSMIRLGLFLTSTIELWVNVKYNILNSDCNDFLIWITNNLVQNNFGETGTFVVLIRLFISVLKHNSTVNSSCAIKTQDLYSMLIFCMRNVAYSTLGNIVDELKAYMSKKSHKNRKTILDDLVELFEPMPESVEKAASSCFVLFGLLDCNDTNFVYTLDIFSNYGNIPHISFFLKKAVKNYVNNYYQGNKIQLLNVHILEVIRQWTKRNDTDRQLYFNSVIGSLFGFGSIQEFERQYNREICALIFSRSDSESLERNFFSDRNTSKCEMLRRSLYLLIPLSYYDNGVGDMVFNKLKDSFRGQLESVLSSNFIIVMRYALKLCDCSDYTSVLNEMQRPNQSSSLLELFMDSEMKNAINRMNIYITVHSVIKIFKNCGRSRQTLLLDLRTLILWIISDIQKSESSWEQNNHLRQLQLLVFLYEDTFLQSVLHIELMNWLSYLLKIENIEADVFLLLNCLLSLIKPNSLDKPDSLTLFFLNVLHFYVRNKECLKIGDEDMNMLSNNLSTVNSIALKLLTNGQVTDLIYNQVGDLTSQMYFAEEVELFALLMTFAPPMPDYVSHKMNKKFIEYVYKSNNLIDIDNFSLWFSDYSTQYSSLILELEENSSFCEKDGFGIDDMEIVYDFSDSAVSAMYSVLFRSLISIKPTIGFKSFALSNIICHLISINILKDKDLLSKFLRATKMKIAFSAKEIDETIIEHFGKSNCGCVISEHYLESEFFDTNIPYKDWLVKLCMFFISQISLNSKEIQWFIPLCYESMDFCKQNVCIFFLAAFSFDHRRMSSTWKHIFSRLNDLTMASDCLAKLTLLLSFIRLIRSGALQGRKEYSNLYQKIEFKGVIDAALKIKDSKFALQLFEEAYMCENGDYDVALLTSIYEQLDDVDMLYALPTPISLNGFIKNANRLSPHSLKALQLNGAYFDANFNHLVDNGSHQLVNTLTGMGFNALADIADLRTSCDNPADAYLRCLQLDKWDLPKPKAIDCKIVSFYNTAYDLRNTNIEFVDLLQNAEIQLYKAKANFSSKLEWFETIREYVKTKRAIISLKTDTDISRFKIDHVINPDRYLENALISDIKINWQFRYLMLKIYVEREKFANEAMKCIPILELIHQTELSVDFHIQQTSLSRILSMEAAMKRFHIADTNLVEQLSRHVSYVTALALREFGETKAPLTILSKLLSDKSYKLNYNTFVSDDEVRAQLIWDSYQAKVKSGIQIFENDVEHWDVSINNIRSAPDTIYKVANFLNLEISRLNGSDQLKEKQKSYRRTRQELKDIESVVKSSNLSNEELLVGQKHYHNLKTHMENDRLAIENICLTRKKLIKRALDYYVQILILTNNYDYDVLDRFCGLWFENDDDDDINTDLTSKLSQIPTWKFLPWVNQFTSKLSLLKSKFQKQLWYIMKRLLYKLPFETGYAVINLQLYEKYSDKLDEKISEKIKAANLIFDQLQNSQISVKEGEYLRTIQEFCYATLEIAELKVKGKNAQISLETLNIGRYWITELPKKNLPLPTVTRTINSSQYTLDSSRNIVKVIGNITITSTGLSLPKVMTLLLSDGSRHKVVIKYGSDDLRQDAIMEQVFQQVNKIFGKDVEMRRSDLHMRTYNVVPLGPKAGLIEFVNNSLSLHSILTDIHKDDNYSWLEARRSMKDVQSKSDKERILTYLDITKKISPKFRNFFFNSFIDANGWICAKRKYTKGVATSSMVGYILGLGDRHLNNILIDTTTGEPIHIDLGIAFDQGRLLKIPELVPFRLTRDIIDGFGITGVEGIFRRTCEQVLNVLSRDSEKVMCVLNILKWDPLYSWAVSPFKKHKYMYDDNLEGHMTTATNNSKVIERKLTPKLDSDENQQSYRALKGVQEKLDRNGLTIEATVEKLIQEAVDESNLALIFNGWSPFY.

The FAT domain maps to 1715-2294 (GVIDAALKIK…GYAVINLQLY (580 aa)). The region spanning 2403–2712 (IGNITITSTG…RKLTPKLDSD (310 aa)) is the PI3K/PI4K catalytic domain. A G-loop region spans residues 2409 to 2415 (TSTGLSL). A catalytic loop region spans residues 2578 to 2586 (GLGDRHLNN). The activation loop stretch occupies residues 2598-2622 (HIDLGIAFDQGRLLKIPELVPFRLT). The FATC domain maps to 2731–2763 (NGLTIEATVEKLIQEAVDESNLALIFNGWSPFY).

This sequence belongs to the PI3/PI4-kinase family. ATM subfamily. In terms of assembly, associates with DNA double-strand breaks.

Its subcellular location is the nucleus. The protein resides in the chromosome. It localises to the telomere. It catalyses the reaction L-seryl-[protein] + ATP = O-phospho-L-seryl-[protein] + ADP + H(+). The enzyme catalyses L-threonyl-[protein] + ATP = O-phospho-L-threonyl-[protein] + ADP + H(+). Its function is as follows. Serine/threonine protein kinase which activates checkpoint signaling upon genotoxic stresses such as ionizing radiation (IR), ultraviolet light (UV), or DNA replication stalling, thereby acting as a DNA damage sensor. Recognizes the substrate consensus sequence [ST]-Q. Phosphorylates histone H2A to form H2AS128ph (gamma-H2A) at sites of DNA damage, involved in the regulation of DNA damage response mechanism. Required for the control of telomere length and genome stability. The protein is Serine/threonine-protein kinase TEL1 (TEL1) of Candida glabrata (strain ATCC 2001 / BCRC 20586 / JCM 3761 / NBRC 0622 / NRRL Y-65 / CBS 138) (Yeast).